Reading from the N-terminus, the 862-residue chain is Protein kintoun (862 aa).

Disordered regions lie at residues lysine 208–lysine 229, threonine 564–arginine 602, glycine 626–proline 670, and arginine 743–serine 854. Residues threonine 564–arginine 586 are compositionally biased toward basic and acidic residues. A compositionally biased stretch (basic residues) spans threonine 587 to glutamate 601. Basic and acidic residues-rich tracts occupy residues arginine 748–glutamate 757 and lysine 766–lysine 785.

Belongs to the PIH1 family. Kintoun subfamily.

It localises to the cytoplasm. Required for cytoplasmic pre-assembly of axonemal dyneins, thereby playing a central role in motility in cilia and flagella. Involved in pre-assembly of dynein arm complexes in the cytoplasm before intraflagellar transport loads them for the ciliary compartment. The polypeptide is Protein kintoun (Anopheles gambiae (African malaria mosquito)).